The primary structure comprises 195 residues: uncharacterized protein (195 aa).

An HD domain is found at Asn-24 to Asp-141.

This is an uncharacterized protein from Lactococcus lactis subsp. cremoris (Streptococcus cremoris).